Reading from the N-terminus, the 506-residue chain is Chromosomal replication initiator protein DnaA (506 aa).

The domain I, interacts with DnaA modulators stretch occupies residues 1 to 77 (MECATTATTP…IWAEESGAKR (77 aa)). Residues 77–162 (RRVDLAVRNA…AVAGDVASGS (86 aa)) form a domain II region. 2 stretches are compositionally biased toward basic and acidic residues: residues 103–112 (TERTDMHSGD) and 121–142 (SDGR…RAVE). Residues 103–142 (TERTDMHSGDTRQQSARISDGRSTDARGADGRGSDARAVE) form a disordered region. Residues 163-384 (PLDARLTFET…GALNKLLAFN (222 aa)) are domain III, AAA+ region. The ATP site is built by Gly-210, Gly-212, Lys-213, and Thr-214. A domain IV, binds dsDNA region spans residues 385 to 506 (QLTGEPVTLE…EVLKRLALEA (122 aa)).

The protein belongs to the DnaA family. In terms of assembly, oligomerizes as a right-handed, spiral filament on DNA at oriC.

Its subcellular location is the cytoplasm. Functionally, plays an essential role in the initiation and regulation of chromosomal replication. ATP-DnaA binds to the origin of replication (oriC) to initiate formation of the DNA replication initiation complex once per cell cycle. Binds the DnaA box (a 9 base pair repeat at the origin) and separates the double-stranded (ds)DNA. Forms a right-handed helical filament on oriC DNA; dsDNA binds to the exterior of the filament while single-stranded (ss)DNA is stabiized in the filament's interior. The ATP-DnaA-oriC complex binds and stabilizes one strand of the AT-rich DNA unwinding element (DUE), permitting loading of DNA polymerase. After initiation quickly degrades to an ADP-DnaA complex that is not apt for DNA replication. Binds acidic phospholipids. This Xanthobacter autotrophicus (strain ATCC BAA-1158 / Py2) protein is Chromosomal replication initiator protein DnaA.